The primary structure comprises 306 residues: Recombination-associated protein RdgC (306 aa).

This sequence belongs to the RdgC family.

The protein resides in the cytoplasm. It localises to the nucleoid. Its function is as follows. May be involved in recombination. This is Recombination-associated protein RdgC from Burkholderia ambifaria (strain MC40-6).